The primary structure comprises 72 residues: Translation initiation factor IF-1 (72 aa).

An S1-like domain is found at 1 to 72 (MAKEGAIEVE…TRGRIVYRYK (72 aa)).

It belongs to the IF-1 family. As to quaternary structure, component of the 30S ribosomal translation pre-initiation complex which assembles on the 30S ribosome in the order IF-2 and IF-3, IF-1 and N-formylmethionyl-tRNA(fMet); mRNA recruitment can occur at any time during PIC assembly.

It localises to the cytoplasm. Its function is as follows. One of the essential components for the initiation of protein synthesis. Stabilizes the binding of IF-2 and IF-3 on the 30S subunit to which N-formylmethionyl-tRNA(fMet) subsequently binds. Helps modulate mRNA selection, yielding the 30S pre-initiation complex (PIC). Upon addition of the 50S ribosomal subunit IF-1, IF-2 and IF-3 are released leaving the mature 70S translation initiation complex. The sequence is that of Translation initiation factor IF-1 from Corynebacterium diphtheriae (strain ATCC 700971 / NCTC 13129 / Biotype gravis).